Reading from the N-terminus, the 482-residue chain is MASIQALHQELITKERSAQEITEAALETIHQLEPKLHSFLAITADQALAQAKQVDAQLAAGEEIGLLAGIPIGIKDNMCTKGIATTCGSKILQNFIPPYESTVTQKLAAAGAVMVGKTNLDEFAMGSSTENSAYQVTGNPWDVSRVPGGSSGGSAAAVAADECVVSIGSDTGGSIRQPAALCGVVGLKPTYGLVSRFGLVAYASSLDQIGPFGRTVEDAAILLQEIAGYDPQDSTSLKVEIPDYSKSLIPDLKGKKVGVITETFGEGLDEVVEKVVRKAIDQLAELGAEVQEISCPRFRYGLPTYYVIAPSEASANLARYDGVKYGYRTDDPDDLMSMYTNTRAEGFGAEVKRRIMIGTYALSAGYYDAYYLKAQKVRTLIKEDFEKAFESVDVLVCPTTPTTAFKAGEKTADPLSMYLSDLMTIPVNLAGLPGLSLPCGFDDQGLPIGLQMIGNVLREDQVLQAAYAYEQSTEWHKASPKL.

Residues lysine 75 and serine 150 each act as charge relay system in the active site. The active-site Acyl-ester intermediate is serine 174.

This sequence belongs to the amidase family. GatA subfamily. In terms of assembly, heterotrimer of A, B and C subunits.

It carries out the reaction L-glutamyl-tRNA(Gln) + L-glutamine + ATP + H2O = L-glutaminyl-tRNA(Gln) + L-glutamate + ADP + phosphate + H(+). Its function is as follows. Allows the formation of correctly charged Gln-tRNA(Gln) through the transamidation of misacylated Glu-tRNA(Gln) in organisms which lack glutaminyl-tRNA synthetase. The reaction takes place in the presence of glutamine and ATP through an activated gamma-phospho-Glu-tRNA(Gln). The sequence is that of Glutamyl-tRNA(Gln) amidotransferase subunit A from Acaryochloris marina (strain MBIC 11017).